Reading from the N-terminus, the 591-residue chain is Aspartate--tRNA(Asp/Asn) ligase (591 aa).

E176 is an L-aspartate binding site. Positions 200-203 (QLFK) are aspartate. R222 serves as a coordination point for L-aspartate. Residues 222-224 (RDE) and Q231 contribute to the ATP site. H450 contacts L-aspartate. E484 is an ATP binding site. Position 491 (R491) interacts with L-aspartate. 536-539 (GLDR) lines the ATP pocket.

It belongs to the class-II aminoacyl-tRNA synthetase family. Type 1 subfamily. Homodimer.

It is found in the cytoplasm. The catalysed reaction is tRNA(Asx) + L-aspartate + ATP = L-aspartyl-tRNA(Asx) + AMP + diphosphate. Aspartyl-tRNA synthetase with relaxed tRNA specificity since it is able to aspartylate not only its cognate tRNA(Asp) but also tRNA(Asn). Reaction proceeds in two steps: L-aspartate is first activated by ATP to form Asp-AMP and then transferred to the acceptor end of tRNA(Asp/Asn). In Bacillus cereus (strain G9842), this protein is Aspartate--tRNA(Asp/Asn) ligase.